A 224-amino-acid chain; its full sequence is Ribose-5-phosphate isomerase A (224 aa).

Substrate-binding positions include 26–29 (TGST), 81–84 (DGAD), and 94–97 (KGGG). The active-site Proton acceptor is glutamate 103. Residue lysine 121 coordinates substrate.

This sequence belongs to the ribose 5-phosphate isomerase family. As to quaternary structure, homodimer.

It carries out the reaction aldehydo-D-ribose 5-phosphate = D-ribulose 5-phosphate. Its pathway is carbohydrate degradation; pentose phosphate pathway; D-ribose 5-phosphate from D-ribulose 5-phosphate (non-oxidative stage): step 1/1. Catalyzes the reversible conversion of ribose-5-phosphate to ribulose 5-phosphate. This chain is Ribose-5-phosphate isomerase A, found in Listeria monocytogenes serotype 4b (strain F2365).